The primary structure comprises 761 residues: Semaphorin-4A (761 aa).

Positions M1–G32 are cleaved as a signal peptide. The Extracellular segment spans residues G33–H683. The Sema domain occupies Q36–R494. Residues C113 and C124 are joined by a disulfide bond. 2 N-linked (GlcNAc...) asparagine glycosylation sites follow: N120 and N135. Intrachain disulfides connect C142–C151, C269–C379, and C293–C339. The N-linked (GlcNAc...) asparagine glycan is linked to N496. A PSI domain is found at N496–A548. Intrachain disulfides connect C497-C514, C506-C523, and C580-C624. In terms of domain architecture, Ig-like C2-type spans N573–F631. N-linked (GlcNAc...) asparagine glycosylation occurs at N607. Residues F684–A704 form a helical membrane-spanning segment. Topologically, residues S705 to A761 are cytoplasmic. The segment at L722–V749 is disordered. Positions R723–R743 are enriched in basic and acidic residues.

The protein belongs to the semaphorin family. As to quaternary structure, interacts with PLXNB1, PLXNB2, PLXNB3, PLXND1 and TIMD2.

It localises to the cell membrane. Functionally, cell surface receptor for PLXNB1, PLXNB2, PLXNB3 and PLXND1 that plays an important role in cell-cell signaling. Regulates glutamatergic and GABAergic synapse development. Promotes the development of inhibitory synapses in a PLXNB1-dependent manner and promotes the development of excitatory synapses in a PLXNB2-dependent manner. Plays a role in priming antigen-specific T-cells, promotes differentiation of Th1 T-helper cells, and thereby contributes to adaptive immunity. Promotes phosphorylation of TIMD2. Inhibits angiogenesis. Promotes axon growth cone collapse. Inhibits axonal extension by providing local signals to specify territories inaccessible for growing axons. This chain is Semaphorin-4A (SEMA4A), found in Homo sapiens (Human).